The chain runs to 143 residues: Large ribosomal subunit protein uL15 (143 aa).

The tract at residues Met-1–Pro-56 is disordered. The segment covering Arg-21 to Ala-31 has biased composition (gly residues).

Belongs to the universal ribosomal protein uL15 family. As to quaternary structure, part of the 50S ribosomal subunit.

Its function is as follows. Binds to the 23S rRNA. The polypeptide is Large ribosomal subunit protein uL15 (Delftia acidovorans (strain DSM 14801 / SPH-1)).